We begin with the raw amino-acid sequence, 336 residues long: Glucokinase (336 aa).

Position 12–17 (12–17 (ADIGGT)) interacts with ATP.

The protein belongs to the bacterial glucokinase family.

The protein localises to the cytoplasm. It catalyses the reaction D-glucose + ATP = D-glucose 6-phosphate + ADP + H(+). In Helicobacter pylori (strain ATCC 700392 / 26695) (Campylobacter pylori), this protein is Glucokinase.